The primary structure comprises 349 residues: DNA replication and repair protein RecF (349 aa).

G30 to T37 is a binding site for ATP.

Belongs to the RecF family.

Its subcellular location is the cytoplasm. Its function is as follows. The RecF protein is involved in DNA metabolism; it is required for DNA replication and normal SOS inducibility. RecF binds preferentially to single-stranded, linear DNA. It also seems to bind ATP. The protein is DNA replication and repair protein RecF of Francisella tularensis subsp. holarctica (strain FTNF002-00 / FTA).